Reading from the N-terminus, the 404-residue chain is Tryptophan synthase beta chain (404 aa).

An N6-(pyridoxal phosphate)lysine modification is found at Lys-98.

This sequence belongs to the TrpB family. As to quaternary structure, tetramer of two alpha and two beta chains. It depends on pyridoxal 5'-phosphate as a cofactor.

It carries out the reaction (1S,2R)-1-C-(indol-3-yl)glycerol 3-phosphate + L-serine = D-glyceraldehyde 3-phosphate + L-tryptophan + H2O. It participates in amino-acid biosynthesis; L-tryptophan biosynthesis; L-tryptophan from chorismate: step 5/5. Its function is as follows. The beta subunit is responsible for the synthesis of L-tryptophan from indole and L-serine. The protein is Tryptophan synthase beta chain of Rhodopseudomonas palustris (strain BisA53).